The sequence spans 514 residues: 2-isopropylmalate synthase (514 aa).

The 264-residue stretch at 5-268 folds into the Pyruvate carboxyltransferase domain; it reads LIIFDTTLRD…DVGLDTTQIV (264 aa). The Mn(2+) site is built by Asp-14, His-202, His-204, and Asn-239. Residues 395–514 form a regulatory domain region; sequence KFVSLSQRSE…KDDKLNPQRS (120 aa).

Belongs to the alpha-IPM synthase/homocitrate synthase family. LeuA type 1 subfamily. Homodimer. Mn(2+) is required as a cofactor.

The protein resides in the cytoplasm. The catalysed reaction is 3-methyl-2-oxobutanoate + acetyl-CoA + H2O = (2S)-2-isopropylmalate + CoA + H(+). It participates in amino-acid biosynthesis; L-leucine biosynthesis; L-leucine from 3-methyl-2-oxobutanoate: step 1/4. Catalyzes the condensation of the acetyl group of acetyl-CoA with 3-methyl-2-oxobutanoate (2-ketoisovalerate) to form 3-carboxy-3-hydroxy-4-methylpentanoate (2-isopropylmalate). This chain is 2-isopropylmalate synthase, found in Burkholderia ambifaria (strain ATCC BAA-244 / DSM 16087 / CCUG 44356 / LMG 19182 / AMMD) (Burkholderia cepacia (strain AMMD)).